The sequence spans 367 residues: Peptide chain release factor 2 (367 aa).

N5-methylglutamine is present on Gln-254.

This sequence belongs to the prokaryotic/mitochondrial release factor family. In terms of processing, methylated by PrmC. Methylation increases the termination efficiency of RF2.

It localises to the cytoplasm. Peptide chain release factor 2 directs the termination of translation in response to the peptide chain termination codons UGA and UAA. This chain is Peptide chain release factor 2, found in Bordetella bronchiseptica (strain ATCC BAA-588 / NCTC 13252 / RB50) (Alcaligenes bronchisepticus).